Here is a 178-residue protein sequence, read N- to C-terminus: Thioredoxin F1, chloroplastic (178 aa).

A disordered region spans residues 1–22 (MPLSLRLSPSPTALSPTTGGFG). The transit peptide at 1-57 (MPLSLRLSPSPTALSPTTGGFGPSRKQCRIPYSGVPTTKIGFCSLDSRKRGDSSVVR) directs the protein to the chloroplast. The segment covering 7–18 (LSPSPTALSPTT) has biased composition (polar residues). Residues 58 to 174 (CSLETVNVSV…LVAAIETARS (117 aa)) form the Thioredoxin domain. Active-site nucleophile residues include cysteine 99 and cysteine 102. Cysteine 99 and cysteine 102 are oxidised to a cystine. Cysteine 126 carries the post-translational modification S-glutathionyl cysteine; transient.

Belongs to the thioredoxin family. Plant F-type subfamily. Glutathionylation at Cys-126 decreases its ability to be reduced by ferredoxin-thioredoxin reductase and reduces its efficiency in activating target chloroplastic enzymes.

Its subcellular location is the plastid. It localises to the chloroplast stroma. Thiol-disulfide oxidoreductase involved in the redox regulation of enzymes of both reductive pentose phosphate pathway (Calvin-Benson cycle) and oxidative pentose phosphate pathway. Under light or reducing conditions, activates in chloroplast the glyceraldehyde-3-phosphate dehydrogenase, the phosphoribulokinase and the fructose-1,6-bisphosphate phosphatase, and inhibits the glucose-6-phosphate dehydrogenase. The polypeptide is Thioredoxin F1, chloroplastic (Arabidopsis thaliana (Mouse-ear cress)).